A 186-amino-acid polypeptide reads, in one-letter code: Probable calcium-binding protein CML25 (186 aa).

Residues 1-17 (MFNKNQGSNGGSSSNVG) show a composition bias toward low complexity. The segment at 1–23 (MFNKNQGSNGGSSSNVGIGADSP) is disordered. EF-hand domains lie at 33 to 68 (TEIR…LGHE), 69 to 104 (VPEE…GMDQ), 106 to 141 (DVLE…LGDE), and 142 to 177 (CSIA…GSRR). The Ca(2+) site is built by aspartate 46, asparagine 48, aspartate 50, lysine 52, and glutamate 57. Positions 119, 121, 123, 125, 130, 155, 157, 159, 161, and 166 each coordinate Ca(2+).

Functionally, potential calcium sensor. This chain is Probable calcium-binding protein CML25 (CML25), found in Arabidopsis thaliana (Mouse-ear cress).